The primary structure comprises 110 residues: U1-lycotoxin-Ls1hh (110 aa).

The first 20 residues, 1–20, serve as a signal peptide directing secretion; it reads MKFVLLFGVLLVTLFSYSSA. Residues 21–44 constitute a propeptide that is removed on maturation; that stretch reads EMLDDFDQADEDELLSLIEKEEAR. 4 cysteine pairs are disulfide-bonded: cysteine 47–cysteine 62, cysteine 54–cysteine 71, cysteine 61–cysteine 89, and cysteine 73–cysteine 87.

This sequence belongs to the neurotoxin 19 (CSTX) family. 03 subfamily. Expressed by the venom gland.

The protein resides in the secreted. In Lycosa singoriensis (Wolf spider), this protein is U1-lycotoxin-Ls1hh.